The primary structure comprises 434 residues: F-box/LRR-repeat protein 21 (434 aa).

An F-box domain is found at 39–85 (LLDWGNLPHHVVLRIFQYLPLIDRARASSVCRRWNEVFHIPDLWRKF). 6 LRR repeats span residues 187–213 (DTPVDDPSLSILVANNSGTLRRLKMSS), 214–239 (CPHVSSNGILCVADHCQGLRELALNY), 242–265 (LSDKLLLALSNETHVNLEHLRIDV), 322–347 (GRSVSKEILGRLGLNCPRLTELVVCA), 349–374 (GIQVIDTELICIAEHCKNLTALGLSE), and 375–400 (CEVSCSAFIEFVRLCGRKLTHLSIME).

In terms of assembly, part of the SCF (SKP1-CUL1-F-box) E3 ubiquitin-protein ligase complex SCF(FBXL21) composed of CUL1, SKP1, RBX1 and FBXL21. Interacts with CRY1 and CRY2.

It is found in the cytoplasm. The protein localises to the cytosol. It localises to the nucleus. It functions in the pathway protein modification; protein ubiquitination. Functionally, substrate-recognition component of the SCF(FBXL21) E3 ubiquitin ligase complex involved in circadian rhythm function. Plays a key role in the maintenance of both the speed and the robustness of the circadian clock oscillation. The SCF(FBXL21) complex mainly acts in the cytosol and mediates ubiquitination of CRY proteins (CRY1 and CRY2), leading to CRY proteins stabilization. The SCF(FBXL21) complex counteracts the activity of the SCF(FBXL3) complex and protects CRY proteins from degradation. Involved in the hypothalamic suprachiasmatic nucleus (SCN) clock regulating temporal organization of the daily activities. This Bos taurus (Bovine) protein is F-box/LRR-repeat protein 21 (FBXL21).